Consider the following 72-residue polypeptide: Prokaryotic ubiquitin-like protein Pup (72 aa).

Gly residues predominate over residues 1-10; sequence MATKDTGGGQ. Residues 1-45 form a disordered region; it reads MATKDTGGGQQKATRSTEEVEEQAQDAQASEDLKERQEKLSDDVD. Residues 10 to 60 are a coiled coil; that stretch reads QQKATRSTEEVEEQAQDAQASEDLKERQEKLSDDVDSVLDEIDDVLEENAE. Residues 28-66 are ARC ATPase binding; the sequence is QASEDLKERQEKLSDDVDSVLDEIDDVLEENAEDFVRSF. Basic and acidic residues predominate over residues 31–42; sequence EDLKERQEKLSD. An Isoglutamyl lysine isopeptide (Glu-Lys) (interchain with K-? in acceptor proteins) cross-link involves residue glutamate 72.

It belongs to the prokaryotic ubiquitin-like protein family. Strongly interacts with the proteasome-associated ATPase ARC through a hydrophobic interface; the interacting region of Pup lies in its C-terminal half. There is one Pup binding site per ARC hexamer ring.

Its pathway is protein degradation; proteasomal Pup-dependent pathway. Functionally, protein modifier that is covalently attached to lysine residues of substrate proteins, thereby targeting them for proteasomal degradation. The tagging system is termed pupylation. In Streptomyces coelicolor (strain ATCC BAA-471 / A3(2) / M145), this protein is Prokaryotic ubiquitin-like protein Pup.